Here is a 252-residue protein sequence, read N- to C-terminus: MSRKPFIAGNWKMNKNPEEAKAFVEAVASKLPSSDLVEAGIAAPAVDLTAVLAAAKGSNLKVAAQNCYFENSGAFTGETSPQVLKEIGTDYVVIGHSERRDYFHETDEDINKKAKAIFANGMLPIICCGESLETYEAGKAAEFVGAQVSAALAGLTAEQVASTVIAYEPIWAIGTGKSASQDDAQKMCKVVRDVVAADFGQEVADKVRVQYGGSVKPENVASYMACPDVDGALVGGASLEAESFLALLDFVK.

10 to 12 provides a ligand contact to substrate; sequence NWK. H96 acts as the Electrophile in catalysis. Catalysis depends on E168, which acts as the Proton acceptor. Substrate is bound by residues G174, S214, and 235–236; that span reads GG.

Belongs to the triosephosphate isomerase family. In terms of assembly, homodimer.

Its subcellular location is the cytoplasm. It catalyses the reaction D-glyceraldehyde 3-phosphate = dihydroxyacetone phosphate. It functions in the pathway carbohydrate biosynthesis; gluconeogenesis. Its pathway is carbohydrate degradation; glycolysis; D-glyceraldehyde 3-phosphate from glycerone phosphate: step 1/1. Its function is as follows. Involved in the gluconeogenesis. Catalyzes stereospecifically the conversion of dihydroxyacetone phosphate (DHAP) to D-glyceraldehyde-3-phosphate (G3P). This is Triosephosphate isomerase from Streptococcus gordonii (strain Challis / ATCC 35105 / BCRC 15272 / CH1 / DL1 / V288).